The following is a 337-amino-acid chain: RNA 3'-terminal phosphate cyclase (337 aa).

Residues glutamine 100 and 281-285 (YMGDQ) each bind ATP. Histidine 306 (tele-AMP-histidine intermediate) is an active-site residue.

It belongs to the RNA 3'-terminal cyclase family. Type 1 subfamily.

It is found in the cytoplasm. The catalysed reaction is a 3'-end 3'-phospho-ribonucleotide-RNA + ATP = a 3'-end 2',3'-cyclophospho-ribonucleotide-RNA + AMP + diphosphate. Its function is as follows. Catalyzes the conversion of 3'-phosphate to a 2',3'-cyclic phosphodiester at the end of RNA. The mechanism of action of the enzyme occurs in 3 steps: (A) adenylation of the enzyme by ATP; (B) transfer of adenylate to an RNA-N3'P to produce RNA-N3'PP5'A; (C) and attack of the adjacent 2'-hydroxyl on the 3'-phosphorus in the diester linkage to produce the cyclic end product. The biological role of this enzyme is unknown but it is likely to function in some aspects of cellular RNA processing. The sequence is that of RNA 3'-terminal phosphate cyclase (rtcA) from Methanothermobacter thermautotrophicus (strain ATCC 29096 / DSM 1053 / JCM 10044 / NBRC 100330 / Delta H) (Methanobacterium thermoautotrophicum).